The following is a 714-amino-acid chain: ATP-dependent DNA helicase DinG (714 aa).

Residues 17–294 (ALQDQIPDFI…TSMEQFRPKT (278 aa)) enclose the Helicase ATP-binding domain. ATP is bound at residue 54–61 (APTGVGKT). Positions 120, 194, 199, and 205 each coordinate [4Fe-4S] cluster. The short motif at 248-251 (DEGH) is the DEAH box element. Residues 517–698 (HIAEMAAYFR…VFPIEQPAVP (182 aa)) enclose the Helicase C-terminal domain.

Belongs to the helicase family. DinG subfamily. Type 1 sub-subfamily. It depends on [4Fe-4S] cluster as a cofactor.

The enzyme catalyses Couples ATP hydrolysis with the unwinding of duplex DNA at the replication fork by translocating in the 5'-3' direction. This creates two antiparallel DNA single strands (ssDNA). The leading ssDNA polymer is the template for DNA polymerase III holoenzyme which synthesizes a continuous strand.. The catalysed reaction is ATP + H2O = ADP + phosphate + H(+). In terms of biological role, DNA-dependent ATPase and 5'-3' DNA helicase. Unwinds D-loops, R-loops, forked DNA and G-quadruplex DNA. This chain is ATP-dependent DNA helicase DinG, found in Salmonella choleraesuis (strain SC-B67).